The primary structure comprises 693 residues: Elongation factor G 1 (693 aa).

The 278-residue stretch at 4–281 (NKLRNIGISA…AVTRFLPSPH (278 aa)) folds into the tr-type G domain. GTP contacts are provided by residues 13–20 (AHIDSGKT), 80–84 (DTPGH), and 134–137 (NKCD).

This sequence belongs to the TRAFAC class translation factor GTPase superfamily. Classic translation factor GTPase family. EF-G/EF-2 subfamily.

Its subcellular location is the cytoplasm. Functionally, catalyzes the GTP-dependent ribosomal translocation step during translation elongation. During this step, the ribosome changes from the pre-translocational (PRE) to the post-translocational (POST) state as the newly formed A-site-bound peptidyl-tRNA and P-site-bound deacylated tRNA move to the P and E sites, respectively. Catalyzes the coordinated movement of the two tRNA molecules, the mRNA and conformational changes in the ribosome. This Borreliella burgdorferi (strain ATCC 35210 / DSM 4680 / CIP 102532 / B31) (Borrelia burgdorferi) protein is Elongation factor G 1 (fusA).